Reading from the N-terminus, the 894-residue chain is Exocyst complex component 2 (894 aa).

Residues 5–89 (PVVTGLSPKE…GTSTVQFRAY (85 aa)) form the IPT/TIG domain. The segment covering 398-413 (HTSKDSGAQEKAKNRD) has biased composition (basic and acidic residues). Residues 398 to 417 (HTSKDSGAQEKAKNRDSSQA) are disordered.

Belongs to the SEC5 family. As to quaternary structure, the exocyst complex is composed of Sec3/Exoc1, Sec5/Exoc2, Sec6/Exoc3, Sec8/Exoc4, Sec10/Exoc5, Sec15/Exoc6, Exo70/Exoc7 and Exo84/Exoc8.

Functionally, component of the exocyst complex involved in the docking of exocytic vesicles with fusion sites on the plasma membrane. The chain is Exocyst complex component 2 from Drosophila melanogaster (Fruit fly).